The chain runs to 195 residues: Thioredoxin reductase-like selenoprotein T (195 aa).

The first 19 residues, 1-19 (MRLLLLLLVAASAMVRSEA), serve as a signal peptide directing secretion. The segment at residues 46–49 (CVSU) is a cross-link (cysteinyl-selenocysteine (Cys-Sec)). Residue Sec-49 is a non-standard amino acid, selenocysteine. Residues 85–103 (IASFLSVFKLVLIGLIIVG) traverse the membrane as a helical segment.

Belongs to the SelWTH family. Selenoprotein T subfamily. Post-translationally, may contain a selenide-sulfide bond between Cys-46 and Sec-49. This bond is speculated to serve as redox-active pair. In terms of tissue distribution, ubiquitous. Highly expressed in the endocrine pancreas.

It localises to the endoplasmic reticulum membrane. It carries out the reaction [thioredoxin]-dithiol + NADP(+) = [thioredoxin]-disulfide + NADPH + H(+). Functionally, selenoprotein with thioredoxin reductase-like oxidoreductase activity. Protects dopaminergic neurons against oxidative stress and cell death. Involved in ADCYAP1/PACAP-induced calcium mobilization and neuroendocrine secretion. Plays a role in fibroblast anchorage and redox regulation. In gastric smooth muscle, modulates the contraction processes through the regulation of calcium release and MYLK activation. In pancreatic islets, involved in the control of glucose homeostasis, contributes to prolonged ADCYAP1/PACAP-induced insulin secretion. The sequence is that of Thioredoxin reductase-like selenoprotein T from Homo sapiens (Human).